Here is a 598-residue protein sequence, read N- to C-terminus: Arginine--tRNA ligase (598 aa).

The short motif at 139-149 is the 'HIGH' region element; sequence ANPTGPMHVGH.

Belongs to the class-I aminoacyl-tRNA synthetase family. In terms of assembly, monomer.

It localises to the cytoplasm. The enzyme catalyses tRNA(Arg) + L-arginine + ATP = L-arginyl-tRNA(Arg) + AMP + diphosphate. This Bradyrhizobium sp. (strain BTAi1 / ATCC BAA-1182) protein is Arginine--tRNA ligase.